Consider the following 431-residue polypeptide: Enolase (431 aa).

Gln-167 lines the (2R)-2-phosphoglycerate pocket. Glu-209 (proton donor) is an active-site residue. Residues Asp-246, Glu-290, and Asp-317 each contribute to the Mg(2+) site. Residues Lys-342, Arg-371, Ser-372, and Lys-393 each contribute to the (2R)-2-phosphoglycerate site. Lys-342 functions as the Proton acceptor in the catalytic mechanism.

The protein belongs to the enolase family. In terms of assembly, component of the RNA degradosome, a multiprotein complex involved in RNA processing and mRNA degradation. Mg(2+) is required as a cofactor.

It is found in the cytoplasm. Its subcellular location is the secreted. The protein resides in the cell surface. It catalyses the reaction (2R)-2-phosphoglycerate = phosphoenolpyruvate + H2O. The protein operates within carbohydrate degradation; glycolysis; pyruvate from D-glyceraldehyde 3-phosphate: step 4/5. Its function is as follows. Catalyzes the reversible conversion of 2-phosphoglycerate (2-PG) into phosphoenolpyruvate (PEP). It is essential for the degradation of carbohydrates via glycolysis. This chain is Enolase, found in Yersinia pestis bv. Antiqua (strain Antiqua).